Reading from the N-terminus, the 544-residue chain is CTP synthase (544 aa).

The amidoligase domain stretch occupies residues M1–I266. Position 13 (S13) interacts with CTP. S13 is a UTP binding site. ATP is bound by residues S14 to I19 and D71. Mg(2+)-binding residues include D71 and E140. CTP is bound by residues D147–E149, K187–Q192, and K223. UTP-binding positions include K187–Q192 and K223. R239–V241 contributes to the ATP binding site. The 252-residue stretch at T292–L543 folds into the Glutamine amidotransferase type-1 domain. G355 is an L-glutamine binding site. The Nucleophile; for glutamine hydrolysis role is filled by C382. L-glutamine-binding positions include Y383–Q386, E406, and R471. Catalysis depends on residues H516 and E518.

This sequence belongs to the CTP synthase family. In terms of assembly, homotetramer.

The catalysed reaction is UTP + L-glutamine + ATP + H2O = CTP + L-glutamate + ADP + phosphate + 2 H(+). It catalyses the reaction L-glutamine + H2O = L-glutamate + NH4(+). It carries out the reaction UTP + NH4(+) + ATP = CTP + ADP + phosphate + 2 H(+). It participates in pyrimidine metabolism; CTP biosynthesis via de novo pathway; CTP from UDP: step 2/2. Allosterically activated by GTP, when glutamine is the substrate; GTP has no effect on the reaction when ammonia is the substrate. The allosteric effector GTP functions by stabilizing the protein conformation that binds the tetrahedral intermediate(s) formed during glutamine hydrolysis. Inhibited by the product CTP, via allosteric rather than competitive inhibition. In terms of biological role, catalyzes the ATP-dependent amination of UTP to CTP with either L-glutamine or ammonia as the source of nitrogen. Regulates intracellular CTP levels through interactions with the four ribonucleotide triphosphates. The polypeptide is CTP synthase (Hyphomonas neptunium (strain ATCC 15444)).